We begin with the raw amino-acid sequence, 276 residues long: Glutamate 5-kinase (276 aa).

Residue Lys-14 participates in ATP binding. Ser-54, Asp-141, and Asn-157 together coordinate substrate. ATP contacts are provided by residues 177 to 178 and 219 to 225; these read SD and TGGMLTK.

This sequence belongs to the glutamate 5-kinase family.

Its subcellular location is the cytoplasm. It carries out the reaction L-glutamate + ATP = L-glutamyl 5-phosphate + ADP. It functions in the pathway amino-acid biosynthesis; L-proline biosynthesis; L-glutamate 5-semialdehyde from L-glutamate: step 1/2. Catalyzes the transfer of a phosphate group to glutamate to form L-glutamate 5-phosphate. In Listeria welshimeri serovar 6b (strain ATCC 35897 / DSM 20650 / CCUG 15529 / CIP 8149 / NCTC 11857 / SLCC 5334 / V8), this protein is Glutamate 5-kinase.